We begin with the raw amino-acid sequence, 122 residues long: Large ribosomal subunit protein uL14c (122 aa).

It belongs to the universal ribosomal protein uL14 family. As to quaternary structure, part of the 50S ribosomal subunit.

It localises to the plastid. Its subcellular location is the chloroplast. Functionally, binds to 23S rRNA. This Gracilaria tenuistipitata var. liui (Red alga) protein is Large ribosomal subunit protein uL14c.